Reading from the N-terminus, the 735-residue chain is F-box and leucine-rich repeat protein 13 (735 aa).

Positions 152 to 198 constitute an F-box domain; that stretch reads KCDISLLPERAILQIFFYLSLKDVIICGQVNHAWMLMTQLNSLWNAI. LRR repeat units lie at residues 230–254, 255–280, 281–305, 306–333, 334–359, 360–385, 386–406, 410–435, 436–460, 461–488, 489–514, 515–538, 539–563, 564–589, 590–615, 616–641, and 642–667; these read GCLL…NVSD, CPTF…NLSN, TTIT…SLAY, CRRF…DLSG, CTQI…TIND, MPTL…VFTG, APHI…RKIR, NKRV…YMAD, CKGI…NLAN, CVRI…NLSN, CVRL…SLRN, CEHL…IDLS, GTDI…SVSE, CYRI…DVSY, CSQL…SIAG, CPKI…DISG, and CVLL…KMQY. Positions 682 to 692 are enriched in polar residues; that stretch reads KVQQQEYNTND. Positions 682-703 are disordered; it reads KVQQQEYNTNDPPRWFGYDREG.

Belongs to the DRC6 family. Component of the nexin-dynein regulatory complex (N-DRC). Directly interacts with SKP1 and CUL1. Interacts with TCTE1/DRC5.

It is found in the cytoplasm. It localises to the cytoskeleton. The protein localises to the flagellum axoneme. The protein resides in the microtubule organizing center. Its subcellular location is the centrosome. Functionally, substrate-recognition component of the SCF (SKP1-CUL1-F-box protein)-type E3 ubiquitin ligase complex. Component of the nexin-dynein regulatory complex (N-DRC), a key regulator of ciliary/flagellar motility which maintains the alignment and integrity of the distal axoneme and regulates microtubule sliding in motile axonemes. Specifically targets CEP192 isoform 3 for ubiquitin-mediated proteolysis and thereby acts as a regulator of microtubule nucleation activity. The sequence is that of F-box and leucine-rich repeat protein 13 (FBXL13) from Homo sapiens (Human).